A 130-amino-acid chain; its full sequence is Secreted cysteine-rich effector 2 (130 aa).

The first 23 residues, 1 to 23, serve as a signal peptide directing secretion; sequence MLINAARLLLPAAALVHLSLAWA. The plant immunity suppression domain stretch occupies residues 68–85; that stretch reads LKNGEDWCKHCASPRVSV.

Its subcellular location is the secreted. It localises to the host cell. It is found in the host periplasm. Secreted effector required for full virulence of U.virens. Inhibits host pathogen-associated molecular pattern-triggered immunity including flg22- and chitin-induced defense gene expression and oxidative burst. The polypeptide is Secreted cysteine-rich effector 2 (Ustilaginoidea virens (Rice false smut fungus)).